We begin with the raw amino-acid sequence, 375 residues long: Nicotinate-nucleotide--dimethylbenzimidazole phosphoribosyltransferase (375 aa).

Glu323 (proton acceptor) is an active-site residue. Residues 344–375 form a disordered region; that stretch reads LPEKPEELEAGEGPEAAEESSPEPENPEALAE. A compositionally biased stretch (acidic residues) spans 351-375; sequence LEAGEGPEAAEESSPEPENPEALAE.

The protein belongs to the CobT family.

The catalysed reaction is 5,6-dimethylbenzimidazole + nicotinate beta-D-ribonucleotide = alpha-ribazole 5'-phosphate + nicotinate + H(+). It functions in the pathway nucleoside biosynthesis; alpha-ribazole biosynthesis; alpha-ribazole from 5,6-dimethylbenzimidazole: step 1/2. In terms of biological role, catalyzes the synthesis of alpha-ribazole-5'-phosphate from nicotinate mononucleotide (NAMN) and 5,6-dimethylbenzimidazole (DMB). The polypeptide is Nicotinate-nucleotide--dimethylbenzimidazole phosphoribosyltransferase (Streptomyces avermitilis (strain ATCC 31267 / DSM 46492 / JCM 5070 / NBRC 14893 / NCIMB 12804 / NRRL 8165 / MA-4680)).